Here is a 345-residue protein sequence, read N- to C-terminus: Transcription factor 19 (345 aa).

An FHA domain is found at 31 to 88 (YRLGHRADLCDVALRPQQEPGLISGIHAELHAEPRGDDWRVSLEDHSSQGTLVNNVRL). Ser78 carries the post-translational modification Phosphoserine. Residues 190–227 (LTFSPSWGGPKSLPVPAPPGEMGTTPSAPPQRNRRKSV) are disordered. A PHD-type zinc finger spans residues 293-342 (AAPCCCLPQEETVAWVQCDGCDVWFHVACVGCSIQAAREADFRCPGCRAG). Positions 296, 298, 310, 313, 318, 321, 336, and 339 each coordinate Zn(2+).

The protein resides in the nucleus. Functionally, potential transcription factor that may play a role in the regulation of genes involved in cell cycle G1/S transition. May bind to regulatory elements of genes, including the promoter of the transcription factor FOXO1. This Homo sapiens (Human) protein is Transcription factor 19 (TCF19).